The sequence spans 618 residues: Sphingomyelin phosphodiesterase 2 (618 aa).

Residues 1–22 (MQQPLIILGIGIVLALVSNVES) form the signal peptide. Positions 68–151 (RKMSCLFCTF…AFIANCGHSD (84 aa)) constitute a Saposin B-type domain. 3 cysteine pairs are disulfide-bonded: Cys72-Cys147, Cys75-Cys140, and Cys103-Cys114. N-linked (GlcNAc...) asparagine glycosylation is present at Asn89. N-linked (GlcNAc...) asparagine glycosylation occurs at Asn159. The Zn(2+) site is built by Asp189 and His191. 2 disulfides stabilise this stretch: Cys204/Cys216 and Cys217/Cys249. Asp278 contacts Zn(2+). Asn298 is a glycosylation site (N-linked (GlcNAc...) asparagine). Zn(2+) is bound by residues Asn318, His427, His461, and His463. An intrachain disulfide couples Cys387 to Cys435. Asn525 and Asn568 each carry an N-linked (GlcNAc...) asparagine glycan. 2 disulfide bridges follow: Cys588–Cys594 and Cys600–Cys613.

Belongs to the acid sphingomyelinase family. Zn(2+) is required as a cofactor.

It localises to the secreted. It carries out the reaction a sphingomyelin + H2O = phosphocholine + an N-acylsphing-4-enine + H(+). The enzyme catalyses an N-acyl-15-methylhexadecasphing-4-enine-1-phosphocholine + H2O = an N-acyl-15-methylhexadecasphing-4-enine + phosphocholine + H(+). The protein operates within lipid metabolism; sphingolipid metabolism. Sphingomyelin phosphodiesterase (sphingomyelinase) that converts sphingomyelin (N-acyl-sphingoid-1-phosphocholine) to ceramide (N-acyl-sphingoid base) and phosphocholine at acidic pH. Displays its enzymatic activity when secreted. May play distinct roles in signaling. This is Sphingomyelin phosphodiesterase 2 (asm-2) from Caenorhabditis elegans.